A 185-amino-acid chain; its full sequence is NEDD8-conjugating enzyme UBE2F (185 aa).

Residues 1–29 form an interaction with UBA3 region; sequence MLTLASKLKRDDGVRGPRASNPASDSTRR. The disordered stretch occupies residues 11–30; it reads DDGVRGPRASNPASDSTRRV. The 154-residue stretch at 32 to 185 folds into the UBC core domain; sequence VRDKLLVKEV…VEDYIKRYAR (154 aa). The active-site Glycyl thioester intermediate is Cys-116.

The protein belongs to the ubiquitin-conjugating enzyme family. UBE2F subfamily.

The catalysed reaction is [E1 NEDD8-activating enzyme]-S-[NEDD8 protein]-yl-L-cysteine + [E2 NEDD8-conjugating enzyme]-L-cysteine = [E1 NEDD8-activating enzyme]-L-cysteine + [E2 NEDD8-conjugating enzyme]-S-[NEDD8-protein]-yl-L-cysteine.. Its pathway is protein modification; protein neddylation. Its function is as follows. Accepts the ubiquitin-like protein NEDD8 from the UBA3-NAE1 E1 complex and catalyzes its covalent attachment to other proteins. Together with the E3 ubiquitin ligase RNF7/RBX2, specifically neddylates cullin-5 (CUL5). Does not neddylate CUL1, CUL2, CUL3, CUL4A or CUL4B. This chain is NEDD8-conjugating enzyme UBE2F (UBE2F), found in Gallus gallus (Chicken).